Reading from the N-terminus, the 367-residue chain is Outer membrane protein P2 (367 aa).

The first 20 residues, 1 to 20 (MKKTLAALIVGAFAASAANA), serve as a signal peptide directing secretion.

It belongs to the Gram-negative porin family. In terms of assembly, homotrimer.

It is found in the cell outer membrane. Functionally, forms pores that allow passive diffusion of small molecules across the outer membrane. The polypeptide is Outer membrane protein P2 (ompP2) (Haemophilus influenzae).